Reading from the N-terminus, the 244-residue chain is Small ribosomal subunit protein uS2 (244 aa).

The protein belongs to the universal ribosomal protein uS2 family.

In Buchnera aphidicola subsp. Acyrthosiphon pisum (strain 5A), this protein is Small ribosomal subunit protein uS2.